Here is a 619-residue protein sequence, read N- to C-terminus: Chaperone protein HscA homolog (619 aa).

This sequence belongs to the heat shock protein 70 family.

Chaperone involved in the maturation of iron-sulfur cluster-containing proteins. Has a low intrinsic ATPase activity which is markedly stimulated by HscB. The sequence is that of Chaperone protein HscA homolog from Azotobacter vinelandii.